The chain runs to 850 residues: DNA mismatch repair protein MutS (850 aa).

608–615 (GPNMGGKS) lines the ATP pocket.

It belongs to the DNA mismatch repair MutS family.

This protein is involved in the repair of mismatches in DNA. It is possible that it carries out the mismatch recognition step. This protein has a weak ATPase activity. The polypeptide is DNA mismatch repair protein MutS (Thiobacillus denitrificans (strain ATCC 25259 / T1)).